We begin with the raw amino-acid sequence, 274 residues long: MTVYTPTSERQAPATTHRQMWALGDYAAIAEELLAPLGPILVSTSGIRRGDRVLDVAAGSGNVSIPAAMAGAHVTASDLTPELLRRAQARAAAAGLELGWREANAEALPFSAGEFDAVLSTIGVMFAPRHQRTADELARVCRRGGKISTLNWTPEGFYGKLLSTIRPYRPTLPAGAPHEVWWGSEDYVSGLFRDHVSDIRTRRGSLTVDRFGCPDECRDYFKNFYGPAINAYRSIADSPECVATLDAEITELCREYLCDGVMQWEYLIFTARKC.

Residues 1–30 form the signal peptide; the sequence is MTVYTPTSERQAPATTHRQMWALGDYAAIA.

To M.tuberculosis Rv1405c.

This is an uncharacterized protein from Mycobacterium tuberculosis (strain CDC 1551 / Oshkosh).